The sequence spans 172 residues: uncharacterized protein (172 aa).

Disordered stretches follow at residues 1 to 54 (MPRR…GGSS) and 82 to 111 (ITGG…SVPE). Residues 14-29 (AAPARSASTAAALPPR) show a composition bias toward low complexity. Pro residues predominate over residues 30 to 47 (TMAPPPAPSRVQQAPPPT). Residues 89–109 (SGSNNAPADTSVPQSSYSNSV) show a composition bias toward polar residues.

This is an uncharacterized protein from Schizosaccharomyces pombe (strain 972 / ATCC 24843) (Fission yeast).